A 119-amino-acid polypeptide reads, in one-letter code: Large ribosomal subunit protein uL18 (119 aa).

Belongs to the universal ribosomal protein uL18 family. Part of the 50S ribosomal subunit; part of the 5S rRNA/L5/L18/L25 subcomplex. Contacts the 5S and 23S rRNAs.

This is one of the proteins that bind and probably mediate the attachment of the 5S RNA into the large ribosomal subunit, where it forms part of the central protuberance. This Solibacter usitatus (strain Ellin6076) protein is Large ribosomal subunit protein uL18.